The sequence spans 298 residues: MASLKALRGRITSVKSTQKITSAMKMVAASKLRRAQQAAEAARPYAELMQRMLAALADNVAGSPSAPRILVGTGQDKVHLLVVISADRGLAGAFNTNVGRAARTLANRLESEGKTVKILTVGRKARDYLRRDLETRLLPETSLAGKKVLAFADALALSQQITARLDAGEFDVCTLVYNHFNSVISQTPGETQLIPAQVPQAAPADAGASSNGAKAVYEFEPDEETLLAKLLPQNLAIQIYRAILESAAGEHAARMTAMDNATRNAGDMIKRLSLTYNRTRQANITRELIEIISGAEAL.

The protein belongs to the ATPase gamma chain family. As to quaternary structure, F-type ATPases have 2 components, CF(1) - the catalytic core - and CF(0) - the membrane proton channel. CF(1) has five subunits: alpha(3), beta(3), gamma(1), delta(1), epsilon(1). CF(0) has three main subunits: a, b and c.

The protein localises to the cell inner membrane. In terms of biological role, produces ATP from ADP in the presence of a proton gradient across the membrane. The gamma chain is believed to be important in regulating ATPase activity and the flow of protons through the CF(0) complex. This is ATP synthase gamma chain from Granulibacter bethesdensis (strain ATCC BAA-1260 / CGDNIH1).